The primary structure comprises 153 residues: 6,7-dimethyl-8-ribityllumazine synthase (153 aa).

5-amino-6-(D-ribitylamino)uracil is bound by residues Phe-22, 56–58, and 80–82; these read AFE and TVI. (2S)-2-hydroxy-3-oxobutyl phosphate is bound at residue 85-86; it reads ST. The active-site Proton donor is His-88. 5-amino-6-(D-ribitylamino)uracil is bound at residue Phe-113. Residue Arg-127 coordinates (2S)-2-hydroxy-3-oxobutyl phosphate.

This sequence belongs to the DMRL synthase family. In terms of assembly, forms an icosahedral capsid composed of 60 subunits, arranged as a dodecamer of pentamers.

It catalyses the reaction (2S)-2-hydroxy-3-oxobutyl phosphate + 5-amino-6-(D-ribitylamino)uracil = 6,7-dimethyl-8-(1-D-ribityl)lumazine + phosphate + 2 H2O + H(+). Its pathway is cofactor biosynthesis; riboflavin biosynthesis; riboflavin from 2-hydroxy-3-oxobutyl phosphate and 5-amino-6-(D-ribitylamino)uracil: step 1/2. Its function is as follows. Catalyzes the formation of 6,7-dimethyl-8-ribityllumazine by condensation of 5-amino-6-(D-ribitylamino)uracil with 3,4-dihydroxy-2-butanone 4-phosphate. This is the penultimate step in the biosynthesis of riboflavin. This Glaesserella parasuis serovar 5 (strain SH0165) (Haemophilus parasuis) protein is 6,7-dimethyl-8-ribityllumazine synthase.